The chain runs to 226 residues: 2-C-methyl-D-erythritol 4-phosphate cytidylyltransferase (226 aa).

This sequence belongs to the IspD/TarI cytidylyltransferase family. IspD subfamily.

It catalyses the reaction 2-C-methyl-D-erythritol 4-phosphate + CTP + H(+) = 4-CDP-2-C-methyl-D-erythritol + diphosphate. Its pathway is isoprenoid biosynthesis; isopentenyl diphosphate biosynthesis via DXP pathway; isopentenyl diphosphate from 1-deoxy-D-xylulose 5-phosphate: step 2/6. Its function is as follows. Catalyzes the formation of 4-diphosphocytidyl-2-C-methyl-D-erythritol from CTP and 2-C-methyl-D-erythritol 4-phosphate (MEP). The polypeptide is 2-C-methyl-D-erythritol 4-phosphate cytidylyltransferase (Prochlorococcus marinus (strain SARG / CCMP1375 / SS120)).